Here is a 412-residue protein sequence, read N- to C-terminus: Thyroxine-binding globulin (412 aa).

A signal peptide spans 1–16 (MPLFLYMVLLVLGIHC). Residues N20, N35, N98, N164, and N252 are each glycosylated (N-linked (GlcNAc...) asparagine). Thyroxine is bound by residues N292 and K395.

Belongs to the serpin family. In terms of tissue distribution, expressed by the liver and secreted in plasma.

It localises to the secreted. Functionally, major thyroid hormone transport protein in serum. In Sus scrofa (Pig), this protein is Thyroxine-binding globulin (SERPINA7).